We begin with the raw amino-acid sequence, 88 residues long: Small ribosomal subunit protein uS15c (88 aa).

This sequence belongs to the universal ribosomal protein uS15 family. As to quaternary structure, part of the 30S ribosomal subunit.

Its subcellular location is the plastid. It localises to the chloroplast. This is Small ribosomal subunit protein uS15c (rps15) from Lobularia maritima (Sweet alyssum).